We begin with the raw amino-acid sequence, 760 residues long: MSRPIVLHICLAFCSLLLLNFAAQCLAFPNLERREIVLLHAEKGQSERLNTDDLENDSVTSNTPVSGDPMIVLAGPSTMSLNKVFPSNKETSPVGAGLMQADGSNIYTATEPEVPAGEEVFGSSQPERMSPESRPSKATLTNPVMPTASLNIDEREEPSRGTIIQPTVEGTTEATQGFLSYVDDQLFATESPEGLSLGHSPLSLVNTKEMLTTSPRTEKFEANPEHKTTSFPGSKLTAGTEPSQMTADNTQATAATKHWLPTSESILSVEPETDSLLGAPEVTTSVSTAVAAAPVISDEWDDTKLESVSQIKTPKLGDNTETQVRMEISQTTQAPDIGMEVMEEGKALTEAADVSLKLPEMETHMETTLPMAHGGERASDQSSVTPTSPMGDTKVSVMNLVQDTADFVESTKENGAMFLETTVSISEYESEVHQPLGNRFKDIITQEMTTAVQAAEATVSLVTQEQQVATLEVTRGEDETKGGRELPSATVDAPRATQLSRRWEPLATVVSTTPIPVSFKVTPAVEDVMDTVTGPNEELFTPILGSPVTPPGITEEAPSTSPALADPEASSERRTAAPSFSYVNTAASYGLDQLESEEGEDDEDEEDEEEEDEEEEDEEEDEEDKDADSLDEALGDTELPGFTLPGITSQEPGLEQENVVSLEGVTFQVPDAIQWEQQNQGLVRSWMEKLKDKAGYMSGMLVPVGVGIAGALFILGALYSIKVMNRRRRNGFKRHKRKQREFNSMQDRVMLLADSSEDEF.

Positions 1 to 27 are cleaved as a signal peptide; it reads MSRPIVLHICLAFCSLLLLNFAAQCLA. At 28 to 700 the chain is on the extracellular side; the sequence is FPNLERREIV…KDKAGYMSGM (673 aa). Disordered regions lie at residues 49–69, 117–143, 216–243, 373–392, 474–495, and 536–652; these read LNTD…SGDP, GEEV…LTNP, RTEK…TEPS, HGGE…PMGD, TRGE…DAPR, and NEEL…SQEP. N-linked (GlcNAc...) asparagine glycosylation occurs at asparagine 56. The segment covering 216–228 has biased composition (basic and acidic residues); it reads RTEKFEANPEHKT. Polar residues predominate over residues 380-390; the sequence is DQSSVTPTSPM. Over residues 474-484 the composition is skewed to basic and acidic residues; it reads TRGEDETKGGR. Residues 594–635 are compositionally biased toward acidic residues; the sequence is LESEEGEDDEDEEDEEEEDEEEEDEEEDEEDKDADSLDEALG. The helical transmembrane segment at 701–721 threads the bilayer; sequence LVPVGVGIAGALFILGALYSI. Residues 722-760 are Cytoplasmic-facing; sequence KVMNRRRRNGFKRHKRKQREFNSMQDRVMLLADSSEDEF. Phosphoserine occurs at positions 755 and 756.

As to quaternary structure, interacts with IL6ST; this interaction prevents IL6ST protein homodimerization and bridges ARMH4 with IL6R and STAT3 and therefore inhibits phosphorylation of STAT3 at 'Tyr-705'. Interacts (via cytoplasmic tail) with RICTOR; this interaction bridges ARMH4 to the mTORC2 complex and inhibits the mTORC2 kinase activity.

The protein localises to the membrane. In terms of biological role, may modulate immune response and may play a role in inflammation. Down-modulates STAT3 signaling throught direct interaction with IL6ST, resulting in the inhibition of phosphorylation of STAT3 at Tyr-705. May negatively regulates AKT signaling by modulating the activity of mTORC2 complex through RICTOR interaction. The protein is Armadillo-like helical domain-containing protein 4 of Bos taurus (Bovine).